An 878-amino-acid polypeptide reads, in one-letter code: Alanine--tRNA ligase (878 aa).

4 residues coordinate Zn(2+): histidine 566, histidine 570, cysteine 668, and histidine 672. The disordered stretch occupies residues 846-866 (GGGRPDMAQAGGKQPEKLEEA).

Belongs to the class-II aminoacyl-tRNA synthetase family. Zn(2+) serves as cofactor.

The protein resides in the cytoplasm. It carries out the reaction tRNA(Ala) + L-alanine + ATP = L-alanyl-tRNA(Ala) + AMP + diphosphate. Functionally, catalyzes the attachment of alanine to tRNA(Ala) in a two-step reaction: alanine is first activated by ATP to form Ala-AMP and then transferred to the acceptor end of tRNA(Ala). Also edits incorrectly charged Ser-tRNA(Ala) and Gly-tRNA(Ala) via its editing domain. The protein is Alanine--tRNA ligase of Bacillus pumilus (strain SAFR-032).